The following is a 739-amino-acid chain: Long-chain-fatty-acid--CoA ligase ACSBG2 (739 aa).

ATP-binding positions include 287 to 295 (TSGTTGQPK), 478 to 483 (ELYGMS), Asp556, Arg571, and Lys684.

Belongs to the ATP-dependent AMP-binding enzyme family. Bubblegum subfamily.

It localises to the cytoplasm. It catalyses the reaction a long-chain fatty acid + ATP + CoA = a long-chain fatty acyl-CoA + AMP + diphosphate. The catalysed reaction is (5Z,8Z,11Z,14Z)-eicosatetraenoate + ATP + CoA = (5Z,8Z,11Z,14Z)-eicosatetraenoyl-CoA + AMP + diphosphate. The enzyme catalyses hexadecanoate + ATP + CoA = hexadecanoyl-CoA + AMP + diphosphate. It carries out the reaction (9Z)-octadecenoate + ATP + CoA = (9Z)-octadecenoyl-CoA + AMP + diphosphate. It catalyses the reaction (9Z,12Z)-octadecadienoate + ATP + CoA = (9Z,12Z)-octadecadienoyl-CoA + AMP + diphosphate. The catalysed reaction is tetracosanoate + ATP + CoA = tetracosanoyl-CoA + AMP + diphosphate. In terms of biological role, catalyzes the conversion of fatty acids such as long chain and very long-chain fatty acids to their active form acyl-CoAs for both synthesis of cellular lipids, and degradation via beta-oxidation. Can activate diverse saturated, monosaturated and polyunsaturated fatty acids. The protein is Long-chain-fatty-acid--CoA ligase ACSBG2 of Xenopus laevis (African clawed frog).